Here is a 151-residue protein sequence, read N- to C-terminus: Immunity protein YezG (151 aa).

A coiled-coil region spans residues 62-90 (KDIFKTLLRELRELFEELRTEHRNNNDDV).

As to quaternary structure, interacts with cognate toxin YeeF but not with non-cognate toxin YobL. The interaction probably inhibits the toxic activity of YeeF. May bind with a stoichiometry of 2:2 to YeeF.

The protein localises to the cytoplasm. Functionally, immunity component of one of 6 LXG toxin-immunity modules in this strain. They promote kin selection, mediate competition in biofilms, and drive spatial segregation of different strains, indicating that LXG toxins may help avoid warfare between strains in biofilms. Mediates intercellular competition during biofilm formation; disruption of the operon disadvantages the bacteria, but overexpression of the cognate immunity protein restores growth in competition with wild-type. In situ neutralizes the toxic effect of cognate toxin YeeF. Probably neutralizes the ability to inhibit growth of cognate toxin YeeF. Probably does not have immunity protein activity on other LXG toxins. The chain is Immunity protein YezG (yezG) from Bacillus subtilis (strain 168).